The chain runs to 383 residues: Cytochrome b (383 aa).

Transmembrane regions (helical) follow at residues 34 to 54 (FGSLLGLTLMIQILTGVFLMM), 78 to 99 (WLIRSFHTNGASIFFMFIFLHI), 114 to 134 (WNVGVIMLFLLMATAFMGYVL), and 179 to 199 (FTALHFLLPFIILALLITHLI). The heme b site is built by H84 and H98. Residues H183 and H197 each contribute to the heme b site. An a ubiquinone-binding site is contributed by H202. A run of 4 helical transmembrane segments spans residues 227-247 (MKDVLGAVLAASMLLTLALYL), 289-309 (LGGVLAMFSSIFILLLIPFLH), 321-341 (LSQLLFWTLILNFLALTWIGG), and 348-368 (YILLGQITSLLYFITILILMP).

Belongs to the cytochrome b family. The cytochrome bc1 complex contains 3 respiratory subunits (MT-CYB, CYC1 and UQCRFS1), 2 core proteins (UQCRC1 and UQCRC2) and probably 6 low-molecular weight proteins. Heme b is required as a cofactor.

The protein resides in the mitochondrion inner membrane. Its function is as follows. Component of the ubiquinol-cytochrome c reductase complex (complex III or cytochrome b-c1 complex) that is part of the mitochondrial respiratory chain. The b-c1 complex mediates electron transfer from ubiquinol to cytochrome c. Contributes to the generation of a proton gradient across the mitochondrial membrane that is then used for ATP synthesis. This Caiman crocodilus (Spectacled caiman) protein is Cytochrome b (MT-CYB).